The following is a 188-amino-acid chain: Deoxycytidylate deaminase (188 aa).

Positions 1-171 (MKASTVLQIA…DILRNAGIEV (171 aa)) constitute a CMP/dCMP-type deaminase domain. Positions 19, 49, 94, 102, and 104 each coordinate Zn(2+). Glu106 serves as the catalytic Proton donor. 2 residues coordinate Zn(2+): Cys132 and Cys135.

This sequence belongs to the cytidine and deoxycytidylate deaminase family. As to quaternary structure, homohexamer. Requires Zn(2+) as cofactor.

It carries out the reaction dCMP + H2O + H(+) = dUMP + NH4(+). Allosteric enzyme whose activity is greatly influenced by the end products of its metabolic pathway, dCTP and dTTP. Its function is as follows. Supplies the nucleotide substrate for thymidylate synthetase. The polypeptide is Deoxycytidylate deaminase (CD) (Enterobacteria phage T2 (Bacteriophage T2)).